The following is a 92-amino-acid chain: Small ribosomal subunit protein uS19 (92 aa).

This sequence belongs to the universal ribosomal protein uS19 family.

In terms of biological role, protein S19 forms a complex with S13 that binds strongly to the 16S ribosomal RNA. This Shewanella halifaxensis (strain HAW-EB4) protein is Small ribosomal subunit protein uS19.